Reading from the N-terminus, the 1507-residue chain is Histone-lysine N-methyltransferase set-2 (1507 aa).

Residues 1-32 (MSTHDMNHHPPRKSHSKRDKPSSSNSGPKIEN) are disordered. Over residues 9–18 (HPPRKSHSKR) the composition is skewed to basic residues. In terms of domain architecture, RRM spans 128–199 (VSLFNMDDNC…QNLLATKCTP (72 aa)). Disordered stretches follow at residues 280–578 (DYTM…QPQM), 650–697 (EPFS…EEPA), 803–826 (DEEKRKKEREEKARQEAEKPSNHL), 842–1058 (SSRG…GPII), and 1163–1199 (QKPRKQVFEKDPYEYYEPPPTKRPAPPPRFKKTFKPR). Over residues 296 to 315 (PIPPPPIKEESPPPPPPPPV) the composition is skewed to pro residues. Residues 316 to 327 (ASVSNLAPVPSV) show a composition bias toward low complexity. Over residues 331–342 (YYNNIQPSSSTM) the composition is skewed to polar residues. A compositionally biased stretch (basic and acidic residues) spans 413–444 (VKYETYKMEKRKIKYEGGNKKYEQVHIKERTA). Low complexity predominate over residues 456–465 (SSESASGSSS). Residues 478–488 (KKKKRPKSPNR) are compositionally biased toward basic residues. A compositionally biased stretch (polar residues) spans 566 to 575 (HLQTPYQHVQ). 2 stretches are compositionally biased toward basic and acidic residues: residues 668–680 (DVGRAESPEKPSL) and 803–823 (DEEKRKKEREEKARQEAEKPS). Positions 846–868 (FYRKQKPIPKSHPKHQEHHHHAK) are enriched in basic residues. Residues 869–908 (ASVSTPVHSSSTSRNSSVAPTPQRTVSTSSSSSSAATSAR) are compositionally biased toward low complexity. A compositionally biased stretch (polar residues) spans 941–951 (SFSSTSIQSSP). Residues 958–971 (SSSSRTSSSSSTSS) are compositionally biased toward low complexity. Residues 973 to 982 (KQEETADEKS) are compositionally biased toward basic and acidic residues. Over residues 990-1007 (SSDESSTTGSTATSVVSS) the composition is skewed to low complexity. Basic and acidic residues predominate over residues 1015-1047 (QQEKTDGEPPKKKSQTDFISERVSKIEGEERPL). Pro residues predominate over residues 1179–1190 (EPPPTKRPAPPP). The RxxxRR motif signature appears at 1340–1345 (RLLQRR). In terms of domain architecture, SET spans 1368 to 1485 (KMIKFARSRI…KGEEITYDYK (118 aa)). An S-adenosyl-L-methionine-binding site is contributed by Tyr-1484. In terms of domain architecture, Post-SET spans 1491 to 1507 (DKIDCLCGAKTCRGYLN).

It belongs to the class V-like SAM-binding methyltransferase superfamily. As to quaternary structure, component of the Set1C/COMPASS complex (also known as the SET2 complex), which contains at least set-2, swd-2.1, cfp-1, rbbp-5, wdr-5.1, dpy-30 and ash-2. In terms of tissue distribution, expressed in all cells of embryo. In L1 larva, it is predominantly expressed in Z2 and Z3 primordial germ cells. In adults, it is predominantly expressed in the germline.

The protein resides in the nucleus. It catalyses the reaction L-lysyl(4)-[histone H3] + 3 S-adenosyl-L-methionine = N(6),N(6),N(6)-trimethyl-L-lysyl(4)-[histone H3] + 3 S-adenosyl-L-homocysteine + 3 H(+). The catalysed reaction is N(6)-methyl-L-lysyl(4)-[histone H3] + S-adenosyl-L-methionine = N(6),N(6)-dimethyl-L-lysyl(4)-[histone H3] + S-adenosyl-L-homocysteine + H(+). It carries out the reaction N(6),N(6)-dimethyl-L-lysyl(4)-[histone H3] + S-adenosyl-L-methionine = N(6),N(6),N(6)-trimethyl-L-lysyl(4)-[histone H3] + S-adenosyl-L-homocysteine + H(+). In terms of biological role, catalytic component of the COMPASS (Set1C) complex that specifically mono-, di- and trimethylates histone H3 to form H3K4me1/2/3. Binds RNAs which might negatively affect its histone methyltransferase activity. COMPASS recognizes ubiquitinated H2B on one face of the nucleosome which stimulates the methylation of H3 on the opposing face. H3 'Lys-4' methylation represents a specific tag for epigenetic transcriptional activation. Implicated in the epigenetic inheritance of lifespan over several generations. Acts in the germline to limit the longevity of the soma, probably by regulating a lipid metabolism pathway that signals from the germline to the intestine, thereby preventing accumulation of mono-unsaturated fatty acids. Methylation in the germline is required for germline development and fertility, possibly by ensuring genome stability. May act redundantly with mes-3 and mes-4 proteins in the development of a fertile germline. Required for RNAi. Functions as an antagonist of hpl-1 and hpl-2 activity in growth and somatic gonad development. Cooperates with jmjd-3.1 and egl-27 to ensure robust transdifferentiation of the Y rectal cell to the PDA motor neuron during larval development. The protein is Histone-lysine N-methyltransferase set-2 (set-2) of Caenorhabditis elegans.